The following is a 162-amino-acid chain: Protein cornichon homolog 2 (162 aa).

The Cytoplasmic segment spans residues 1–10 (MAFTFAAFCY). The chain crosses the membrane as a helical span at residues 11–31 (MLTLVLCASLIFFIIWHIIAF). Topologically, residues 32–72 (DDLRTDFKDPIEQGNPSRARERIKNVERVCCLLRKLVVPEY) are lumenal. A helical membrane pass occupies residues 73-93 (CIHGLFCLMFMCAAEWVTLGL). Residues 94 to 138 (NIPLLFYHLWRYFHRPADGSEVMFDPVSIMNVDILNYCQKEAWCK) lie on the Cytoplasmic side of the membrane. The helical transmembrane segment at 139–161 (LAFYLLSFFYYLYRVGATVRYVS) threads the bilayer. A topological domain (lumenal) is located at residue Ala162.

It belongs to the cornichon family.

It localises to the membrane. Its function is as follows. Regulates the trafficking and gating properties of AMPA-selective glutamate receptors (AMPARs). The sequence is that of Protein cornichon homolog 2 (cnih2) from Xenopus laevis (African clawed frog).